The primary structure comprises 704 residues: Myb-related protein B (704 aa).

HTH myb-type domains follow at residues Arg26–Leu77, Asn78–Val133, and Lys134–Val184. A DNA-binding region (H-T-H motif) is located at residues Trp54–Leu77. Lys104 is covalently cross-linked (Glycyl lysine isopeptide (Lys-Gly) (interchain with G-Cter in SUMO2)). 2 DNA-binding regions (H-T-H motif) span residues Trp106–Leu129 and Trp157–Ile180. A Glycyl lysine isopeptide (Lys-Gly) (interchain with G-Cter in SUMO2) cross-link involves residue Lys197. A Phosphothreonine modification is found at Thr267. Lys275 is covalently cross-linked (Glycyl lysine isopeptide (Lys-Gly) (interchain with G-Cter in SUMO2)). The residue at position 282 (Ser282) is a Phosphoserine. The segment at Leu325 to Val412 is disordered. Over residues Ser339–Thr366 the composition is skewed to low complexity. Ser396 is modified (phosphoserine). Lys414 participates in a covalent cross-link: Glycyl lysine isopeptide (Lys-Gly) (interchain with G-Cter in SUMO2). Thr443 and Thr447 each carry phosphothreonine; by CDK2. Residues Lys450 and Lys485 each participate in a glycyl lysine isopeptide (Lys-Gly) (interchain with G-Cter in SUMO2) cross-link. Thr490 and Thr497 each carry phosphothreonine; by CDK2. Residues Lys502 and Lys513 each participate in a glycyl lysine isopeptide (Lys-Gly) (interchain with G-Cter in SUMO2) cross-link. Thr524 bears the Phosphothreonine; by CDK2 mark. Glycyl lysine isopeptide (Lys-Gly) (interchain with G-Cter in SUMO2) cross-links involve residues Lys527, Lys537, and Lys550. Ser581 is subject to Phosphoserine; by CDK2. Glycyl lysine isopeptide (Lys-Gly) (interchain with G-Cter in SUMO2) cross-links involve residues Lys588 and Lys600. Positions Ser603 to Pro626 are disordered. The span at Pro607–Ser620 shows a compositional bias: low complexity. Glycyl lysine isopeptide (Lys-Gly) (interchain with G-Cter in SUMO2) cross-links involve residues Lys629, Lys643, and Lys652.

As to quaternary structure, component of the DREAM complex (also named LINC complex) at least composed of E2F4, E2F5, LIN9, LIN37, LIN52, LIN54, MYBL1, MYBL2, RBL1, RBL2, RBBP4, TFDP1 and TFDP2. The complex exists in quiescent cells where it represses cell cycle-dependent genes. It dissociates in S phase when LIN9, LIN37, LIN52 and LIN54 form a subcomplex that binds to MYBL2. Interacts with CCNF (via the Cyclin N-terminal domain). Phosphorylated by cyclin A/CDK2 during S-phase. Phosphorylation at Thr-524 is probably involved in transcriptional activity.

Its subcellular location is the nucleus. Functionally, transcription factor involved in the regulation of cell survival, proliferation, and differentiation. Transactivates the expression of the CLU gene. The sequence is that of Myb-related protein B (Mybl2) from Mus musculus (Mouse).